We begin with the raw amino-acid sequence, 232 residues long: Ribosomal RNA small subunit methyltransferase G (232 aa).

Residues glycine 75, phenylalanine 80, 126-127, and arginine 143 contribute to the S-adenosyl-L-methionine site; that span reads AE.

This sequence belongs to the methyltransferase superfamily. RNA methyltransferase RsmG family.

The protein resides in the cytoplasm. In terms of biological role, specifically methylates the N7 position of a guanine in 16S rRNA. The chain is Ribosomal RNA small subunit methyltransferase G from Fusobacterium nucleatum subsp. nucleatum (strain ATCC 25586 / DSM 15643 / BCRC 10681 / CIP 101130 / JCM 8532 / KCTC 2640 / LMG 13131 / VPI 4355).